We begin with the raw amino-acid sequence, 116 residues long: Signal recognition particle 14 kDa protein (116 aa).

It belongs to the SRP14 family. As to quaternary structure, heterodimer with ZK512.4/SRP9; binds RNA as heterodimer. Component of a signal recognition particle (SRP) complex that consists of a 7SL RNA molecule of 300 nucleotides and six protein subunits: srpa-72, srpa-68, SRP54, F37F2.2/SRP19, F25G6.8/SRP14 and ZK512.4/SRP9.

The protein localises to the cytoplasm. Functionally, component of the signal recognition particle (SRP) complex, a ribonucleoprotein complex that mediates the cotranslational targeting of secretory and membrane proteins to the endoplasmic reticulum (ER). F37F2.2/srpa-19 together with F25G6.8/srpa-14 and the Alu portion of the SRP RNA, constitutes the elongation arrest domain of SRP. The complex of F37F2.2/srpa-19 and F25G6.8/srpa-14 is required for SRP RNA binding. In Caenorhabditis elegans, this protein is Signal recognition particle 14 kDa protein.